Consider the following 228-residue polypeptide: Ribulose-phosphate 3-epimerase-like protein 1 (228 aa).

S10 is a substrate binding site. H35, D37, and H70 together coordinate a divalent metal cation. The active-site Proton acceptor is the D37. Substrate is bound by residues H70, 146–149 (GFGE), 175–177 (DGG), and 197–198 (GS). D175 is a binding site for a divalent metal cation. The Proton donor role is filled by D175.

This sequence belongs to the ribulose-phosphate 3-epimerase family. In terms of assembly, homodimer. Fe(2+) is required as a cofactor. It depends on Mn(2+) as a cofactor. The cofactor is Zn(2+). Co(2+) serves as cofactor.

It catalyses the reaction D-ribulose 5-phosphate = D-xylulose 5-phosphate. It functions in the pathway carbohydrate degradation. Catalyzes the reversible epimerization of D-ribulose 5-phosphate to D-xylulose 5-phosphate. The chain is Ribulose-phosphate 3-epimerase-like protein 1 (RPEL1) from Homo sapiens (Human).